The sequence spans 546 residues: Chaperonin GroEL (546 aa).

ATP-binding positions include 29–32 (TLGP), lysine 50, 86–90 (DGTTT), glycine 415, and aspartate 495.

The protein belongs to the chaperonin (HSP60) family. Forms a cylinder of 14 subunits composed of two heptameric rings stacked back-to-back. Interacts with the co-chaperonin GroES.

It localises to the cytoplasm. The enzyme catalyses ATP + H2O + a folded polypeptide = ADP + phosphate + an unfolded polypeptide.. Together with its co-chaperonin GroES, plays an essential role in assisting protein folding. The GroEL-GroES system forms a nano-cage that allows encapsulation of the non-native substrate proteins and provides a physical environment optimized to promote and accelerate protein folding. This is Chaperonin GroEL from Parabacteroides distasonis (strain ATCC 8503 / DSM 20701 / CIP 104284 / JCM 5825 / NCTC 11152).